Here is a 365-residue protein sequence, read N- to C-terminus: MNLAAMDPSNYDAQLAEKKRKLSEGFAEFAPPELEVFASEPAHYRMRAEFRVWHEGDDLYYYMFDKVLDAKVRCEQYLPASTLINAIMTSLVEELRPNHSLRHRLFQVDFLSTLSGEILVSLLYHRQLDEQWQVEAAALKQRLSSQFNVNIIGRARKQKIDLDKDFVVETIKVNGQDLHYKQIENSFTQPNAKVSIKMLEWAIDATKQSQGDLLELYCGNGNFTIALAQNFNRVLATELAKPSVGAAQYNIAINNVDNVQIIRMSAEDFSDAMAKKRSFRRLEGIDLDSYNCNTIFVDPPRAGIDDETLKLIQGYERILYISCNPETLKDNLQTLSSSHKITRFALFDQFPYTHHMESGVLLERK.

5 residues coordinate S-adenosyl-L-methionine: glutamine 189, tyrosine 217, asparagine 222, glutamate 238, and aspartate 298. Residue cysteine 323 is the Nucleophile of the active site. Glutamate 357 functions as the Proton acceptor in the catalytic mechanism.

This sequence belongs to the class I-like SAM-binding methyltransferase superfamily. RNA M5U methyltransferase family. TrmA subfamily.

It carries out the reaction uridine(54) in tRNA + S-adenosyl-L-methionine = 5-methyluridine(54) in tRNA + S-adenosyl-L-homocysteine + H(+). It catalyses the reaction uridine(341) in tmRNA + S-adenosyl-L-methionine = 5-methyluridine(341) in tmRNA + S-adenosyl-L-homocysteine + H(+). Functionally, dual-specificity methyltransferase that catalyzes the formation of 5-methyluridine at position 54 (m5U54) in all tRNAs, and that of position 341 (m5U341) in tmRNA (transfer-mRNA). In Shewanella denitrificans (strain OS217 / ATCC BAA-1090 / DSM 15013), this protein is tRNA/tmRNA (uracil-C(5))-methyltransferase.